The sequence spans 345 residues: Phosphoribosylformylglycinamidine cyclo-ligase (345 aa).

The protein belongs to the AIR synthase family.

It is found in the cytoplasm. It catalyses the reaction 2-formamido-N(1)-(5-O-phospho-beta-D-ribosyl)acetamidine + ATP = 5-amino-1-(5-phospho-beta-D-ribosyl)imidazole + ADP + phosphate + H(+). The protein operates within purine metabolism; IMP biosynthesis via de novo pathway; 5-amino-1-(5-phospho-D-ribosyl)imidazole from N(2)-formyl-N(1)-(5-phospho-D-ribosyl)glycinamide: step 2/2. This Escherichia coli (strain SE11) protein is Phosphoribosylformylglycinamidine cyclo-ligase.